The primary structure comprises 848 residues: DNA mismatch repair protein MutS (848 aa).

605 to 612 lines the ATP pocket; it reads GPNMAGKS.

This sequence belongs to the DNA mismatch repair MutS family.

This protein is involved in the repair of mismatches in DNA. It is possible that it carries out the mismatch recognition step. This protein has a weak ATPase activity. This Leptospira interrogans serogroup Icterohaemorrhagiae serovar copenhageni (strain Fiocruz L1-130) protein is DNA mismatch repair protein MutS.